We begin with the raw amino-acid sequence, 342 residues long: D-erythrose-4-phosphate dehydrogenase (342 aa).

NAD(+) is bound at residue 11 to 12; that stretch reads RI. Substrate-binding positions include 153–155, Arg199, 212–213, and Arg235; these read SCT and TK. The active-site Nucleophile is the Cys154. Asn317 is an NAD(+) binding site.

It belongs to the glyceraldehyde-3-phosphate dehydrogenase family. Epd subfamily. In terms of assembly, homotetramer.

The protein localises to the cytoplasm. It carries out the reaction D-erythrose 4-phosphate + NAD(+) + H2O = 4-phospho-D-erythronate + NADH + 2 H(+). It functions in the pathway cofactor biosynthesis; pyridoxine 5'-phosphate biosynthesis; pyridoxine 5'-phosphate from D-erythrose 4-phosphate: step 1/5. Functionally, catalyzes the NAD-dependent conversion of D-erythrose 4-phosphate to 4-phosphoerythronate. The polypeptide is D-erythrose-4-phosphate dehydrogenase (Shewanella denitrificans (strain OS217 / ATCC BAA-1090 / DSM 15013)).